The primary structure comprises 79 residues: Sulfur carrier protein TusA (79 aa).

The Cysteine persulfide intermediate role is filled by Cys17.

Belongs to the sulfur carrier protein TusA family.

Its subcellular location is the cytoplasm. Its function is as follows. Sulfur carrier protein which probably makes part of a sulfur-relay system. This is Sulfur carrier protein TusA from Haemophilus ducreyi (strain 35000HP / ATCC 700724).